We begin with the raw amino-acid sequence, 363 residues long: Membrane-bound lytic murein transglycosylase C (363 aa).

A signal peptide spans 1–15 (MKKYIVFAIIPFLFA). A lipid anchor (N-palmitoyl cysteine) is attached at cysteine 16. Cysteine 16 is lipidated: S-diacylglycerol cysteine.

Belongs to the transglycosylase Slt family.

It is found in the cell outer membrane. The catalysed reaction is Exolytic cleavage of the (1-&gt;4)-beta-glycosidic linkage between N-acetylmuramic acid (MurNAc) and N-acetylglucosamine (GlcNAc) residues in peptidoglycan, from either the reducing or the non-reducing ends of the peptidoglycan chains, with concomitant formation of a 1,6-anhydrobond in the MurNAc residue.. Murein-degrading enzyme. May play a role in recycling of muropeptides during cell elongation and/or cell division. In Histophilus somni (strain 129Pt) (Haemophilus somnus), this protein is Membrane-bound lytic murein transglycosylase C.